A 506-amino-acid polypeptide reads, in one-letter code: 2,3-bisphosphoglycerate-independent phosphoglycerate mutase (506 aa).

Residues aspartate 13 and serine 63 each coordinate Mn(2+). Serine 63 functions as the Phosphoserine intermediate in the catalytic mechanism. Substrate contacts are provided by residues histidine 124, arginine 153–aspartate 154, arginine 183, arginine 189, arginine 254–arginine 257, and lysine 330. Residues aspartate 396, histidine 400, aspartate 437, histidine 438, and histidine 456 each coordinate Mn(2+).

Belongs to the BPG-independent phosphoglycerate mutase family. As to quaternary structure, monomer. It depends on Mn(2+) as a cofactor.

It catalyses the reaction (2R)-2-phosphoglycerate = (2R)-3-phosphoglycerate. The protein operates within carbohydrate degradation; glycolysis; pyruvate from D-glyceraldehyde 3-phosphate: step 3/5. Catalyzes the interconversion of 2-phosphoglycerate and 3-phosphoglycerate. The sequence is that of 2,3-bisphosphoglycerate-independent phosphoglycerate mutase from Cereibacter sphaeroides (strain ATCC 17023 / DSM 158 / JCM 6121 / CCUG 31486 / LMG 2827 / NBRC 12203 / NCIMB 8253 / ATH 2.4.1.) (Rhodobacter sphaeroides).